The primary structure comprises 353 residues: Protein-glutamate methylesterase/protein-glutamine glutaminase 3 (353 aa).

The Response regulatory domain maps to 3 to 120 (KVLIADDSAL…SSSSDMKKVA (118 aa)). Asp-54 bears the 4-aspartylphosphate mark. In terms of domain architecture, CheB-type methylesterase spans 158–353 (PRPGREVTKA…AREIIRAVNR (196 aa)). Residues Ser-173, His-200, and Asp-296 contribute to the active site.

The protein belongs to the CheB family. Phosphorylated by CheA. Phosphorylation of the N-terminal regulatory domain activates the methylesterase activity.

The protein localises to the cytoplasm. The catalysed reaction is [protein]-L-glutamate 5-O-methyl ester + H2O = L-glutamyl-[protein] + methanol + H(+). The enzyme catalyses L-glutaminyl-[protein] + H2O = L-glutamyl-[protein] + NH4(+). Its function is as follows. Involved in chemotaxis. Part of a chemotaxis signal transduction system that modulates chemotaxis in response to various stimuli. Catalyzes the demethylation of specific methylglutamate residues introduced into the chemoreceptors (methyl-accepting chemotaxis proteins or MCP) by CheR. Also mediates the irreversible deamidation of specific glutamine residues to glutamic acid. The chain is Protein-glutamate methylesterase/protein-glutamine glutaminase 3 from Syntrophomonas wolfei subsp. wolfei (strain DSM 2245B / Goettingen).